A 400-amino-acid polypeptide reads, in one-letter code: Elongation factor Tu (400 aa).

In terms of domain architecture, tr-type G spans 10–209 (KPHVNIGTIG…EVDKYIPTPE (200 aa)). The segment at 19–26 (GHVDHGKT) is G1. 19–26 (GHVDHGKT) provides a ligand contact to GTP. Residue Thr-26 coordinates Mg(2+). A G2 region spans residues 60 to 64 (GITIN). Residues 81-84 (DCPG) form a G3 region. GTP is bound by residues 81-85 (DCPGH) and 136-139 (NKAD). The segment at 136-139 (NKAD) is G4. Positions 174–176 (SGL) are G5.

The protein belongs to the TRAFAC class translation factor GTPase superfamily. Classic translation factor GTPase family. EF-Tu/EF-1A subfamily. In terms of assembly, monomer.

Its subcellular location is the cytoplasm. It catalyses the reaction GTP + H2O = GDP + phosphate + H(+). In terms of biological role, GTP hydrolase that promotes the GTP-dependent binding of aminoacyl-tRNA to the A-site of ribosomes during protein biosynthesis. The protein is Elongation factor Tu of Heliobacterium modesticaldum (strain ATCC 51547 / Ice1).